The chain runs to 469 residues: Properdin (469 aa).

The N-terminal stretch at 1-27 (MITEGAQAPRLLLPPLLLLLTLPATGS) is a signal peptide. TSP type-1 domains follow at residues 28–76 (DPVL…QPCR), 77–134 (SPRW…QCCP), 136–191 (MGGW…QVCP), 193–255 (HGAW…PPCP), 257–313 (AGGW…VPCP), 315–377 (DGEW…QHCP), and 379–462 (KGSW…PACK). 3 disulfides stabilise this stretch: cysteine 32–cysteine 56, cysteine 43–cysteine 72, and cysteine 57–cysteine 75. Tryptophan 83 and tryptophan 86 each carry a C-linked (Man) tryptophan glycan. Intrachain disulfides connect cysteine 89/cysteine 127, cysteine 93/cysteine 133, cysteine 104/cysteine 111, cysteine 132/cysteine 170, cysteine 148/cysteine 184, cysteine 152/cysteine 190, and cysteine 163/cysteine 174. An O-linked (Fuc...) threonine glycan is attached at threonine 92. C-linked (Man) tryptophan glycans are attached at residues tryptophan 139, tryptophan 142, and tryptophan 145. The O-linked (Fuc...) threonine glycan is linked to threonine 151. Residues tryptophan 196, tryptophan 199, and tryptophan 202 are each glycosylated (C-linked (Man) tryptophan). Cystine bridges form between cysteine 205–cysteine 248, cysteine 209–cysteine 254, and cysteine 224–cysteine 238. Residue serine 208 is glycosylated (O-linked (Fuc...) serine). Residues 219–238 (TRSRKCSAPEPSQKPPGKPC) form a disordered region. 2 C-linked (Man) tryptophan glycosylation sites follow: tryptophan 260 and tryptophan 263. 3 disulfide bridges follow: cysteine 269/cysteine 306, cysteine 273/cysteine 312, and cysteine 284/cysteine 296. The O-linked (Fuc...) threonine glycan is linked to threonine 272. 2 C-linked (Man) tryptophan glycosylation sites follow: tryptophan 321 and tryptophan 324. Intrachain disulfides connect cysteine 327–cysteine 370, cysteine 337–cysteine 376, and cysteine 350–cysteine 360. The segment at 351-359 (RGRKFDGHR) is interaction with Complement C3 beta chain. Tryptophan 382, tryptophan 385, and tryptophan 388 each carry a C-linked (Man) tryptophan glycan. Cystine bridges form between cysteine 391-cysteine 455, cysteine 395-cysteine 461, and cysteine 407-cysteine 439. Residue asparagine 428 is glycosylated (N-linked (GlcNAc...) (complex) asparagine).

As to quaternary structure, in plasma, properdin exists as dimers, trimers or tetramers in the relative proportions of 26:54:20. Interacts with the pro-C3-convertase enzyme complex (C3b-Bb) comprised of Complement C3 beta chain (C3b) and the Complement factor B Bb fragment (Bb), where it binds (via its TSP type-1 5 domain) with C3b and Bb. This interaction stabilizes the complex and allows it to become the active C3-convertase enzyme complex (C3b-Bb-FP). Interacts with C3b. Interacts with CFB.

It is found in the secreted. Functionally, a positive regulator of the alternate pathway (AP) of complement. It binds to and stabilizes the C3- and C5-convertase enzyme complexes. Inhibits CFI-CFH mediated degradation of Complement C3 beta chain (C3b). The chain is Properdin from Homo sapiens (Human).